The chain runs to 364 residues: Methylthioribose-1-phosphate isomerase (364 aa).

Substrate-binding positions include arginine 49–alanine 51, arginine 89, and glutamine 201. Aspartate 242 functions as the Proton donor in the catalytic mechanism. Asparagine 252–lysine 253 is a substrate binding site.

Belongs to the eIF-2B alpha/beta/delta subunits family. MtnA subfamily.

The enzyme catalyses 5-(methylsulfanyl)-alpha-D-ribose 1-phosphate = 5-(methylsulfanyl)-D-ribulose 1-phosphate. It functions in the pathway amino-acid biosynthesis; L-methionine biosynthesis via salvage pathway; L-methionine from S-methyl-5-thio-alpha-D-ribose 1-phosphate: step 1/6. Functionally, catalyzes the interconversion of methylthioribose-1-phosphate (MTR-1-P) into methylthioribulose-1-phosphate (MTRu-1-P). This chain is Methylthioribose-1-phosphate isomerase, found in Leptospira interrogans serogroup Icterohaemorrhagiae serovar Lai (strain 56601).